The chain runs to 419 residues: Serine hydroxymethyltransferase (419 aa).

Residues L121 and 125–127 (GHL) each bind (6S)-5,6,7,8-tetrahydrofolate. K230 bears the N6-(pyridoxal phosphate)lysine mark. 355–357 (SPF) lines the (6S)-5,6,7,8-tetrahydrofolate pocket.

The protein belongs to the SHMT family. As to quaternary structure, homodimer. It depends on pyridoxal 5'-phosphate as a cofactor.

The protein resides in the cytoplasm. It catalyses the reaction (6R)-5,10-methylene-5,6,7,8-tetrahydrofolate + glycine + H2O = (6S)-5,6,7,8-tetrahydrofolate + L-serine. The protein operates within one-carbon metabolism; tetrahydrofolate interconversion. It participates in amino-acid biosynthesis; glycine biosynthesis; glycine from L-serine: step 1/1. Functionally, catalyzes the reversible interconversion of serine and glycine with tetrahydrofolate (THF) serving as the one-carbon carrier. This reaction serves as the major source of one-carbon groups required for the biosynthesis of purines, thymidylate, methionine, and other important biomolecules. Also exhibits THF-independent aldolase activity toward beta-hydroxyamino acids, producing glycine and aldehydes, via a retro-aldol mechanism. The chain is Serine hydroxymethyltransferase from Streptococcus equi subsp. equi (strain 4047).